Consider the following 245-residue polypeptide: Hydrolase pyvD (245 aa).

Residues C133, D179, and H211 contribute to the active site.

This sequence belongs to the dienelactone hydrolase family.

It functions in the pathway secondary metabolite biosynthesis. Functionally, hydrolase; part of the gene cluster that mediates the biosynthesis of pyranoviolin A, a pyranonigrin analog with a C-3 methoxy group. Initially, the PKS portion of pyvA synthesizes C-10 carbon chain from 5 molecules of malonyl-CoA, which is then condensed with the thiolation (T) domain-bound glycine activated by the adenylation (A) domain. The subsequent chain release by Dieckmann condensation (DKC) could be catalyzed by the TE domain present at the C-terminus of pyvA and/or the alpha/beta hydrolase pyvD, installing the tetramic acid moiety. The FAD-dependent monooxygenase pyvC next epoxidizes one of the olefins of the polyketide part, and the epoxide ring-opening induces the dihydro-gamma-pyrone ring formation. The cytochrome P450 monooxygeanse pyvB would be responsible for the 2 consecutive reactions, in which the dihydro-gamma-pyrone is oxidized to gamma-pyrone and C-7 is hydroxylated to yield pyranonigrin F. Finally, the O-methyltransferase pyvH methylates the C-3 hydroxy group to complete the biosynthesis. The polypeptide is Hydrolase pyvD (Aspergillus violaceofuscus (strain CBS 115571)).